We begin with the raw amino-acid sequence, 329 residues long: DNA-directed RNA polymerase subunit alpha (329 aa).

The alpha N-terminal domain (alpha-NTD) stretch occupies residues 1-234; it reads MQGSVTEFLK…EQLDAFVELR (234 aa). The tract at residues 248–329 is alpha C-terminal domain (alpha-CTD); that stretch reads FDPILLRPVD…WPPASLADDL (82 aa).

It belongs to the RNA polymerase alpha chain family. Homodimer. The RNAP catalytic core consists of 2 alpha, 1 beta, 1 beta' and 1 omega subunit. When a sigma factor is associated with the core the holoenzyme is formed, which can initiate transcription.

It carries out the reaction RNA(n) + a ribonucleoside 5'-triphosphate = RNA(n+1) + diphosphate. Functionally, DNA-dependent RNA polymerase catalyzes the transcription of DNA into RNA using the four ribonucleoside triphosphates as substrates. In Shewanella sp. (strain ANA-3), this protein is DNA-directed RNA polymerase subunit alpha.